The primary structure comprises 282 residues: Malonyl-[acyl-carrier protein] O-methyltransferase 1 (282 aa).

The protein belongs to the methyltransferase superfamily.

The catalysed reaction is malonyl-[ACP] + S-adenosyl-L-methionine = malonyl-[ACP] methyl ester + S-adenosyl-L-homocysteine. It participates in cofactor biosynthesis; biotin biosynthesis. Its function is as follows. Converts the free carboxyl group of a malonyl-thioester to its methyl ester by transfer of a methyl group from S-adenosyl-L-methionine (SAM). It allows to synthesize pimeloyl-ACP via the fatty acid synthetic pathway. This Coxiella burnetii (strain RSA 493 / Nine Mile phase I) protein is Malonyl-[acyl-carrier protein] O-methyltransferase 1.